A 255-amino-acid polypeptide reads, in one-letter code: Triosephosphate isomerase (255 aa).

Position 9 to 11 (9 to 11 (NWK)) interacts with substrate. Residue histidine 95 is the Electrophile of the active site. Glutamate 167 serves as the catalytic Proton acceptor. Substrate contacts are provided by residues glycine 173, serine 212, and 233–234 (GG).

This sequence belongs to the triosephosphate isomerase family. In terms of assembly, homodimer.

The protein localises to the cytoplasm. It catalyses the reaction D-glyceraldehyde 3-phosphate = dihydroxyacetone phosphate. It functions in the pathway carbohydrate biosynthesis; gluconeogenesis. Its pathway is carbohydrate degradation; glycolysis; D-glyceraldehyde 3-phosphate from glycerone phosphate: step 1/1. Functionally, involved in the gluconeogenesis. Catalyzes stereospecifically the conversion of dihydroxyacetone phosphate (DHAP) to D-glyceraldehyde-3-phosphate (G3P). This chain is Triosephosphate isomerase, found in Escherichia fergusonii (strain ATCC 35469 / DSM 13698 / CCUG 18766 / IAM 14443 / JCM 21226 / LMG 7866 / NBRC 102419 / NCTC 12128 / CDC 0568-73).